The primary structure comprises 182 residues: Probable RNA 2'-phosphotransferase (182 aa).

This sequence belongs to the KptA/TPT1 family.

In terms of biological role, removes the 2'-phosphate from RNA via an intermediate in which the phosphate is ADP-ribosylated by NAD followed by a presumed transesterification to release the RNA and generate ADP-ribose 1''-2''-cyclic phosphate (APPR&gt;P). May function as an ADP-ribosylase. The protein is Probable RNA 2'-phosphotransferase of Trichormus variabilis (strain ATCC 29413 / PCC 7937) (Anabaena variabilis).